Here is a 717-residue protein sequence, read N- to C-terminus: UvrABC system protein C (717 aa).

In terms of domain architecture, GIY-YIG spans 16–95; sequence DSPGVYKFRD…IKEFDPRFNV (80 aa). The UVR domain occupies 208–243; it reads GTYIRRLEKDMMQAAEEMEYERAARLRDDAEALKRA. The tract at residues 467 to 548 is disordered; it reads ERTGEWEEAP…PREDDGRPKR (82 aa). Residues 477 to 522 are compositionally biased toward low complexity; that stretch reads EAAPGSASVHASATGPAATGQATAGPAAMGQAAAGPVSTGPAATGP.

The protein belongs to the UvrC family. As to quaternary structure, interacts with UvrB in an incision complex.

The protein resides in the cytoplasm. Functionally, the UvrABC repair system catalyzes the recognition and processing of DNA lesions. UvrC both incises the 5' and 3' sides of the lesion. The N-terminal half is responsible for the 3' incision and the C-terminal half is responsible for the 5' incision. This chain is UvrABC system protein C, found in Streptomyces griseus subsp. griseus (strain JCM 4626 / CBS 651.72 / NBRC 13350 / KCC S-0626 / ISP 5235).